A 358-amino-acid chain; its full sequence is F-box only protein 25 (358 aa).

Residues 1–83 (MPFLGQDWRS…NDTNTQSFYR (83 aa)) form an interaction with beta-actin region. Residues 226–274 (LTLSDLPLHMLNNILYRFSDGWDIITLGQVTPTLYMLSEDRQLWKKLCQ) enclose the F-box domain.

Part of a SCF (SKP1-cullin-F-box) protein ligase complex consisting of FBXO25, SKP1, CUL1 and RBX1. Interacts directly with SKP1 and CUL1. Interacts (via C-terminus) with beta-actin (via N-terminus).

The protein resides in the nucleus. The protein operates within protein modification; protein ubiquitination. In terms of biological role, substrate-recognition component of the SCF (SKP1-CUL1-F-box protein)-type E3 ubiquitin ligase complex. May play a role in accumulation of expanded polyglutamine (polyQ) protein huntingtin (HTT). This Macaca fascicularis (Crab-eating macaque) protein is F-box only protein 25 (FBXO25).